Here is a 445-residue protein sequence, read N- to C-terminus: Trigger factor (445 aa).

Residues 163-248 (GDTVVIDYVG…IHEVKVKELP (86 aa)) form the PPIase FKBP-type domain. Positions 425–445 (KEVESAKDDADKEASDAKADK) are disordered.

The protein belongs to the FKBP-type PPIase family. Tig subfamily.

It is found in the cytoplasm. The catalysed reaction is [protein]-peptidylproline (omega=180) = [protein]-peptidylproline (omega=0). Its function is as follows. Involved in protein export. Acts as a chaperone by maintaining the newly synthesized protein in an open conformation. Functions as a peptidyl-prolyl cis-trans isomerase. The sequence is that of Trigger factor from Lacticaseibacillus casei (strain BL23) (Lactobacillus casei).